Consider the following 158-residue polypeptide: Endoribonuclease YbeY (158 aa).

H124, H128, and H134 together coordinate Zn(2+).

The protein belongs to the endoribonuclease YbeY family. Zn(2+) is required as a cofactor.

It is found in the cytoplasm. Functionally, single strand-specific metallo-endoribonuclease involved in late-stage 70S ribosome quality control and in maturation of the 3' terminus of the 16S rRNA. The protein is Endoribonuclease YbeY of Caldicellulosiruptor bescii (strain ATCC BAA-1888 / DSM 6725 / KCTC 15123 / Z-1320) (Anaerocellum thermophilum).